Consider the following 301-residue polypeptide: Glycine--tRNA ligase alpha subunit (301 aa).

This sequence belongs to the class-II aminoacyl-tRNA synthetase family. As to quaternary structure, tetramer of two alpha and two beta subunits.

It is found in the cytoplasm. The catalysed reaction is tRNA(Gly) + glycine + ATP = glycyl-tRNA(Gly) + AMP + diphosphate. The chain is Glycine--tRNA ligase alpha subunit from Nitrosospira multiformis (strain ATCC 25196 / NCIMB 11849 / C 71).